The chain runs to 184 residues: Cytidylate kinase (184 aa).

8–16 contributes to the ATP binding site; sequence GQPGSGKTT.

Belongs to the cytidylate kinase family. Type 2 subfamily.

The protein resides in the cytoplasm. It carries out the reaction CMP + ATP = CDP + ADP. It catalyses the reaction dCMP + ATP = dCDP + ADP. This Pyrobaculum calidifontis (strain DSM 21063 / JCM 11548 / VA1) protein is Cytidylate kinase.